A 219-amino-acid chain; its full sequence is Holliday junction branch migration complex subunit RuvA (219 aa).

A domain I region spans residues 1–71 (MISWIKGELV…EDSDMLFGFS (71 aa)). Residues 72-150 (TKDQRDFFIQ…NKEIEKENLN (79 aa)) are domain II. The flexible linker stretch occupies residues 151 to 161 (INNFLEKNKDL). The domain III stretch occupies residues 161–219 (LDSIFKDIDLTLQSLNYSKKEIKNLFPKLINNIKNSSLEKESISFENLLKEAMNYLDHK).

This sequence belongs to the RuvA family. Homotetramer. Forms an RuvA(8)-RuvB(12)-Holliday junction (HJ) complex. HJ DNA is sandwiched between 2 RuvA tetramers; dsDNA enters through RuvA and exits via RuvB. An RuvB hexamer assembles on each DNA strand where it exits the tetramer. Each RuvB hexamer is contacted by two RuvA subunits (via domain III) on 2 adjacent RuvB subunits; this complex drives branch migration. In the full resolvosome a probable DNA-RuvA(4)-RuvB(12)-RuvC(2) complex forms which resolves the HJ.

It is found in the cytoplasm. Functionally, the RuvA-RuvB-RuvC complex processes Holliday junction (HJ) DNA during genetic recombination and DNA repair, while the RuvA-RuvB complex plays an important role in the rescue of blocked DNA replication forks via replication fork reversal (RFR). RuvA specifically binds to HJ cruciform DNA, conferring on it an open structure. The RuvB hexamer acts as an ATP-dependent pump, pulling dsDNA into and through the RuvAB complex. HJ branch migration allows RuvC to scan DNA until it finds its consensus sequence, where it cleaves and resolves the cruciform DNA. This chain is Holliday junction branch migration complex subunit RuvA, found in Prochlorococcus marinus subsp. pastoris (strain CCMP1986 / NIES-2087 / MED4).